The sequence spans 174 residues: MYHKYKNVELVKPSGLELKDRLVSVNRVTKVTKGGRAFGFSAIVVVGDENGVVGHGLGKSKDVSEAIAKAVEDAKKNLVKIPLSGKSVPHEQKGKFGGARVNLMPASHGTGVIAGGAVRSVLESVGIHDVLSKSQGSSNPHNVVKATFDALLQMRSAYTVSRQRGISLEKVFKG.

Residues 18–81 (LKDRLVSVNR…EDAKKNLVKI (64 aa)) enclose the S5 DRBM domain.

It belongs to the universal ribosomal protein uS5 family. Part of the 30S ribosomal subunit. Contacts proteins S4 and S8.

Its function is as follows. With S4 and S12 plays an important role in translational accuracy. Located at the back of the 30S subunit body where it stabilizes the conformation of the head with respect to the body. The sequence is that of Small ribosomal subunit protein uS5 from Flavobacterium psychrophilum (strain ATCC 49511 / DSM 21280 / CIP 103535 / JIP02/86).